The sequence spans 294 residues: Cell division control protein 2 homolog 2 (294 aa).

In terms of domain architecture, Protein kinase spans 4–287 (YEKVEKIGEG…ARGALEHEYF (284 aa)). Residues 10–18 (IGEGTYGVV) and K33 contribute to the ATP site. T14 bears the Phosphothreonine mark. Y15 is modified (phosphotyrosine). Catalysis depends on D127, which acts as the Proton acceptor. T161 is subject to Phosphothreonine; by CAK.

It belongs to the protein kinase superfamily. CMGC Ser/Thr protein kinase family. CDC2/CDKX subfamily. As to expression, found in most organs including root, young leaf, stem, vegetative meristem and flower bud.

It carries out the reaction L-seryl-[protein] + ATP = O-phospho-L-seryl-[protein] + ADP + H(+). The enzyme catalyses L-threonyl-[protein] + ATP = O-phospho-L-threonyl-[protein] + ADP + H(+). Phosphorylation at Thr-14 or Tyr-15 inactivates the enzyme, while phosphorylation at Thr-161 activates it. In terms of biological role, plays a key role in the control of the eukaryotic cell cycle. Component of the kinase complex that phosphorylates the repetitive C-terminus of RNA polymerase II. The chain is Cell division control protein 2 homolog 2 (CDC2B) from Medicago sativa (Alfalfa).